The following is a 267-amino-acid chain: 3-methyl-2-oxobutanoate hydroxymethyltransferase (267 aa).

The Mg(2+) site is built by Asp46 and Asp85. Residues 46 to 47 (DS), Asp85, and Lys115 each bind 3-methyl-2-oxobutanoate. Residue Glu117 coordinates Mg(2+). Glu184 serves as the catalytic Proton acceptor.

Belongs to the PanB family. Homodecamer; pentamer of dimers. Mg(2+) is required as a cofactor.

It is found in the cytoplasm. The enzyme catalyses 3-methyl-2-oxobutanoate + (6R)-5,10-methylene-5,6,7,8-tetrahydrofolate + H2O = 2-dehydropantoate + (6S)-5,6,7,8-tetrahydrofolate. It participates in cofactor biosynthesis; (R)-pantothenate biosynthesis; (R)-pantoate from 3-methyl-2-oxobutanoate: step 1/2. Its function is as follows. Catalyzes the reversible reaction in which hydroxymethyl group from 5,10-methylenetetrahydrofolate is transferred onto alpha-ketoisovalerate to form ketopantoate. In Geotalea daltonii (strain DSM 22248 / JCM 15807 / FRC-32) (Geobacter daltonii), this protein is 3-methyl-2-oxobutanoate hydroxymethyltransferase.